The primary structure comprises 680 residues: DNA-directed RNA polymerase subunit beta' (680 aa).

Zn(2+) contacts are provided by Cys68, Cys70, Cys86, and Cys89. 3 residues coordinate Mg(2+): Asp488, Asp490, and Asp492.

This sequence belongs to the RNA polymerase beta' chain family. RpoC1 subfamily. In plastids the minimal PEP RNA polymerase catalytic core is composed of four subunits: alpha, beta, beta', and beta''. When a (nuclear-encoded) sigma factor is associated with the core the holoenzyme is formed, which can initiate transcription. Mg(2+) serves as cofactor. Zn(2+) is required as a cofactor.

The protein resides in the plastid. The protein localises to the chloroplast. The catalysed reaction is RNA(n) + a ribonucleoside 5'-triphosphate = RNA(n+1) + diphosphate. DNA-dependent RNA polymerase catalyzes the transcription of DNA into RNA using the four ribonucleoside triphosphates as substrates. The protein is DNA-directed RNA polymerase subunit beta' of Nicotiana tabacum (Common tobacco).